The primary structure comprises 249 residues: Acetylglutamate kinase (249 aa).

Substrate is bound by residues 38–39 (GG), Arg60, and Asn147.

It belongs to the acetylglutamate kinase family. ArgB subfamily.

The protein resides in the cytoplasm. The catalysed reaction is N-acetyl-L-glutamate + ATP = N-acetyl-L-glutamyl 5-phosphate + ADP. It functions in the pathway amino-acid biosynthesis; L-arginine biosynthesis; N(2)-acetyl-L-ornithine from L-glutamate: step 2/4. Functionally, catalyzes the ATP-dependent phosphorylation of N-acetyl-L-glutamate. The chain is Acetylglutamate kinase from Deinococcus geothermalis (strain DSM 11300 / CIP 105573 / AG-3a).